The chain runs to 454 residues: tRNA modification GTPase MnmE (454 aa).

Arg-23, Glu-80, and Lys-120 together coordinate (6S)-5-formyl-5,6,7,8-tetrahydrofolate. In terms of domain architecture, TrmE-type G spans Gly-216–Gly-377. K(+) is bound at residue Asn-226. Residues Asn-226–Ser-231, Thr-245–Thr-251, Asp-270–Gly-273, Asn-335–Asp-338, and Ser-358–Arg-360 each bind GTP. Residue Ser-230 participates in Mg(2+) binding. Residues Thr-245, Ile-247, and Thr-250 each contribute to the K(+) site. Thr-251 contributes to the Mg(2+) binding site. Lys-454 contacts (6S)-5-formyl-5,6,7,8-tetrahydrofolate.

The protein belongs to the TRAFAC class TrmE-Era-EngA-EngB-Septin-like GTPase superfamily. TrmE GTPase family. In terms of assembly, homodimer. Heterotetramer of two MnmE and two MnmG subunits. K(+) is required as a cofactor.

The protein resides in the cytoplasm. Functionally, exhibits a very high intrinsic GTPase hydrolysis rate. Involved in the addition of a carboxymethylaminomethyl (cmnm) group at the wobble position (U34) of certain tRNAs, forming tRNA-cmnm(5)s(2)U34. The chain is tRNA modification GTPase MnmE from Salmonella choleraesuis (strain SC-B67).